The sequence spans 720 residues: MELGWWPQLGLAFLQLLLISSLPREYTVINEACPGAEWNIMCRECCEYDQIKCECPGKKEVVGYTIPCCRNEENECDSCLIHPGCTIFENCKTCRNGSWGGTLDDFYVKGIYCAECRAGWYGGDCMRCGQVLRVPKGQILLESYPLNAHCEWTIHAKPGFIIQLRIVMLSLEFDYMCQYDYVEVRDGDSSDSQIIKRFCGNERPAPIRSTGSSLHILFHSDGSKNFDGFHAIFEEITACSSSPCFHDGTCLLDSTGSYKCACLAGYTGKHCENLLEERNCSDPGGPVNGYKKITGGPGLIHGHYAKIGTVLTFFCNSSYVLSGNEMRTCQQNGEWSGKQPICIKACREPKISDLVRRKVLPMQVQSRETPLHQLYSSAFSKQKLQDAPTKKPVLPFGDLPPGYQHLHTQLQYECISPFYRRLGSSRRTCLRTGKWSGRAPSCIPICGKTENVSAPKTQGTRWPWQAAIYRRAGGVHGGGLHKDAWFLVCSGALVNERTVVVAAHCVTDLGRVTVIKTADLKVVLGKFYRDDDRDEKSIQSLRISAIILHPNYDPILLDMDIAILKLLDKARMSTRVQPICLAAPRDLSTSFQESRITVAGWNVLADSRSPGYKDDMLRSGVVRVADSLLCEEQHEAQGIPVSVTDSMFCAGRDPTAPSDICTAETGGIAAVSFPGRASPEPRWHLVGLVSWSYDKTCSHSLSTAFTKVLPFKDWIERNMK.

The first 21 residues, 1-21, serve as a signal peptide directing secretion; sequence MELGWWPQLGLAFLQLLLISS. Disulfide bonds link Cys128-Cys150, Cys177-Cys199, Cys239-Cys250, Cys244-Cys260, Cys262-Cys271, Cys280-Cys329, Cys315-Cys342, and Cys414-Cys442. The 109-residue stretch at 128–236 folds into the CUB domain; the sequence is CGQVLRVPKG…DGFHAIFEEI (109 aa). One can recognise an EGF-like domain in the interval 235–272; the sequence is EITACSSSPCFHDGTCLLDSTGSYKCACLAGYTGKHCE. 2 consecutive Sushi domains span residues 278–344 and 387–444; these read RNCS…ICIK and APTK…SCIP. The Peptidase S1 domain occupies 445–720; that stretch reads ICGKTENVSA…FKDWIERNMK (276 aa). Asn451 is a glycosylation site (N-linked (GlcNAc...) asparagine). Disulfide bonds link Cys489–Cys505, Cys630–Cys649, and Cys661–Cys697.

The protein belongs to the peptidase S1 family.

The protein localises to the secreted. In terms of biological role, may play a role in regeneration of skeletal muscle. The sequence is that of Inactive serine protease PAMR1 (PAMR1) from Bos taurus (Bovine).